The sequence spans 314 residues: Olfactory receptor 5I1 (314 aa).

The Extracellular segment spans residues 1-27 (MEFTDRNYTLVTEFILLGFPTRPELQI). N7 carries an N-linked (GlcNAc...) asparagine glycan. Residues 28–48 (VLFLMFLTLYAIILIGNIGLM) form a helical membrane-spanning segment. The Cytoplasmic segment spans residues 49-56 (LLIRIDPH). The chain crosses the membrane as a helical span at residues 57-77 (LQTPMYFFLSNLSFVDLCYFS). Residues 78 to 101 (DIVPKMLVNFLSENKSISYYGCAL) are Extracellular-facing. C99 and C191 are joined by a disulfide. The chain crosses the membrane as a helical span at residues 102–122 (QFYFFCTFADTESFILAAMAY). The Cytoplasmic segment spans residues 123 to 141 (DRYVAICNPLLYTVVMSRG). Residues 142–162 (ICMRLIVLSYLGGNMSSLVHT) form a helical membrane-spanning segment. The Extracellular portion of the chain corresponds to 163–198 (SFAFILKYCDKNVINHFFCDLPPLLKLSCTDTTINE). The chain crosses the membrane as a helical span at residues 199-219 (WLLSTYGSSVEIICFIIIIIS). Topologically, residues 220–239 (YFFILLSVLKIRSFSGRKKT) are cytoplasmic. The chain crosses the membrane as a helical span at residues 240 to 260 (FSTCASHLTSVTIYQGTLLFI). Residues 261–273 (YSRPSYLYSPNTD) lie on the Extracellular side of the membrane. Residues 274–294 (KIISVFYTIFIPVLNPLIYSL) form a helical membrane-spanning segment. The Cytoplasmic portion of the chain corresponds to 295 to 314 (RNKDVKDAAEKVLRSKVDSS).

The protein belongs to the G-protein coupled receptor 1 family.

The protein localises to the cell membrane. Functionally, odorant receptor. In Homo sapiens (Human), this protein is Olfactory receptor 5I1 (OR5I1).